The following is a 337-amino-acid chain: tRNA N6-adenosine threonylcarbamoyltransferase (337 aa).

Fe cation is bound by residues His111 and His115. Substrate-binding positions include 134-138 (LVSGG), Asp167, Gly180, and Asn272. Residue Asp300 participates in Fe cation binding.

This sequence belongs to the KAE1 / TsaD family. Fe(2+) is required as a cofactor.

It localises to the cytoplasm. The enzyme catalyses L-threonylcarbamoyladenylate + adenosine(37) in tRNA = N(6)-L-threonylcarbamoyladenosine(37) in tRNA + AMP + H(+). Its function is as follows. Required for the formation of a threonylcarbamoyl group on adenosine at position 37 (t(6)A37) in tRNAs that read codons beginning with adenine. Is involved in the transfer of the threonylcarbamoyl moiety of threonylcarbamoyl-AMP (TC-AMP) to the N6 group of A37, together with TsaE and TsaB. TsaD likely plays a direct catalytic role in this reaction. This chain is tRNA N6-adenosine threonylcarbamoyltransferase, found in Citrobacter koseri (strain ATCC BAA-895 / CDC 4225-83 / SGSC4696).